Consider the following 560-residue polypeptide: Membrane protein insertase YidC (560 aa).

Helical transmembrane passes span 7–27 (NLIA…YFVV), 334–354 (AIDF…MNFF), 357–377 (YVGN…LLMF), 431–451 (LPIL…YVTI), 476–496 (LFGF…WPIL), and 522–542 (FMPL…LIYW).

The protein belongs to the OXA1/ALB3/YidC family. Type 1 subfamily. Interacts with the Sec translocase complex via SecD. Specifically interacts with transmembrane segments of nascent integral membrane proteins during membrane integration.

Its subcellular location is the cell inner membrane. Functionally, required for the insertion and/or proper folding and/or complex formation of integral membrane proteins into the membrane. Involved in integration of membrane proteins that insert both dependently and independently of the Sec translocase complex, as well as at least some lipoproteins. Aids folding of multispanning membrane proteins. The chain is Membrane protein insertase YidC from Rickettsia canadensis (strain McKiel).